Here is a 101-residue protein sequence, read N- to C-terminus: Small ribosomal subunit protein uS14 (101 aa).

The protein belongs to the universal ribosomal protein uS14 family. In terms of assembly, part of the 30S ribosomal subunit. Contacts proteins S3 and S10.

Functionally, binds 16S rRNA, required for the assembly of 30S particles and may also be responsible for determining the conformation of the 16S rRNA at the A site. This chain is Small ribosomal subunit protein uS14, found in Saccharophagus degradans (strain 2-40 / ATCC 43961 / DSM 17024).